Reading from the N-terminus, the 128-residue chain is Large ribosomal subunit protein bL17 (128 aa).

Belongs to the bacterial ribosomal protein bL17 family. As to quaternary structure, part of the 50S ribosomal subunit. Contacts protein L32.

The chain is Large ribosomal subunit protein bL17 from Pseudomonas fluorescens (strain ATCC BAA-477 / NRRL B-23932 / Pf-5).